The primary structure comprises 305 residues: Mas-related G-protein coupled receptor member A2B (305 aa).

At 1–17 (MDETLPGSINIRILIPK) the chain is on the extracellular side. The helical transmembrane segment at 18-38 (LMIIIFGLVGLMGNAIVFWLL) threads the bilayer. Residues 39-53 (GFHLRRNAFSVYILN) lie on the Cytoplasmic side of the membrane. Residues 54 to 74 (LALADFLFLLSSIIASTLFLL) form a helical membrane-spanning segment. Residues 75 to 78 (KVSY) are Extracellular-facing. Residues 79–99 (LSIIFHLCFNTIMMVVYITGI) form a helical membrane-spanning segment. Over 100-132 (SMLSAISTECCLSVLCPTWYRCHRPVHTSTVMC) the chain is Cytoplasmic. A helical membrane pass occupies residues 133-153 (AVIWVLSLLICILNSYFCAVL). Over 154-167 (HTRYDNDNECLATN) the chain is Extracellular. A helical transmembrane segment spans residues 168–188 (IFTASYMIFLLVVLCLSSLAL). At 189-207 (LARLFCGAGQMKLTRFHVT) the chain is on the cytoplasmic side. A helical membrane pass occupies residues 208–228 (ILLTLLVFLLCGLPFVIYCIL). Over 229-244 (LFKIKDDFHVLDVNFY) the chain is Extracellular. The helical transmembrane segment at 245-265 (LALEVLTAINSCANPIIYFFV) threads the bilayer. Over 266–305 (GSFRHQLKHQTLKMVLQSALQDTPETAENMVEMSSNKAEP) the chain is Cytoplasmic.

Belongs to the G-protein coupled receptor 1 family. Mas subfamily. In terms of tissue distribution, expressed in a subset of sensory neurons that includes nociceptors. Expressed in the subclass of non-peptidergic sensory neurons that are IB4(+) and VR1(-).

The protein localises to the cell membrane. Functionally, orphan receptor. May be a receptor for RFamide-family neuropeptides such as NPFF and NPAF, which are analgesic in vivo. May regulate nociceptor function and/or development, including the sensation or modulation of pain. This is Mas-related G-protein coupled receptor member A2B from Mus musculus (Mouse).